The primary structure comprises 258 residues: Acyl-[acyl-carrier-protein]--UDP-N-acetylglucosamine O-acyltransferase (258 aa).

This sequence belongs to the transferase hexapeptide repeat family. LpxA subfamily. As to quaternary structure, homotrimer.

The protein resides in the cytoplasm. It catalyses the reaction a (3R)-hydroxyacyl-[ACP] + UDP-N-acetyl-alpha-D-glucosamine = a UDP-3-O-[(3R)-3-hydroxyacyl]-N-acetyl-alpha-D-glucosamine + holo-[ACP]. It functions in the pathway glycolipid biosynthesis; lipid IV(A) biosynthesis; lipid IV(A) from (3R)-3-hydroxytetradecanoyl-[acyl-carrier-protein] and UDP-N-acetyl-alpha-D-glucosamine: step 1/6. Involved in the biosynthesis of lipid A, a phosphorylated glycolipid that anchors the lipopolysaccharide to the outer membrane of the cell. The sequence is that of Acyl-[acyl-carrier-protein]--UDP-N-acetylglucosamine O-acyltransferase from Ectopseudomonas mendocina (strain ymp) (Pseudomonas mendocina).